The sequence spans 292 residues: Ribosomal protein L11 methyltransferase (292 aa).

S-adenosyl-L-methionine-binding residues include threonine 144, glycine 165, aspartate 187, and asparagine 229.

It belongs to the methyltransferase superfamily. PrmA family.

It is found in the cytoplasm. It carries out the reaction L-lysyl-[protein] + 3 S-adenosyl-L-methionine = N(6),N(6),N(6)-trimethyl-L-lysyl-[protein] + 3 S-adenosyl-L-homocysteine + 3 H(+). Methylates ribosomal protein L11. This Saccharophagus degradans (strain 2-40 / ATCC 43961 / DSM 17024) protein is Ribosomal protein L11 methyltransferase.